Here is a 349-residue protein sequence, read N- to C-terminus: Cobalt-precorrin-5B C(1)-methyltransferase (349 aa).

It belongs to the CbiD family.

It catalyses the reaction Co-precorrin-5B + S-adenosyl-L-methionine = Co-precorrin-6A + S-adenosyl-L-homocysteine. It participates in cofactor biosynthesis; adenosylcobalamin biosynthesis; cob(II)yrinate a,c-diamide from sirohydrochlorin (anaerobic route): step 6/10. In terms of biological role, catalyzes the methylation of C-1 in cobalt-precorrin-5B to form cobalt-precorrin-6A. The protein is Cobalt-precorrin-5B C(1)-methyltransferase of Saccharolobus islandicus (strain M.16.27) (Sulfolobus islandicus).